The following is a 129-amino-acid chain: Glycine cleavage system H protein (129 aa).

The region spanning 24-106 (SYTVGITEHA…YGEGWFFRVM (83 aa)) is the Lipoyl-binding domain. Lysine 65 is modified (N6-lipoyllysine).

This sequence belongs to the GcvH family. The glycine cleavage system is composed of four proteins: P, T, L and H. Requires (R)-lipoate as cofactor.

The glycine cleavage system catalyzes the degradation of glycine. The H protein shuttles the methylamine group of glycine from the P protein to the T protein. The chain is Glycine cleavage system H protein from Shewanella sp. (strain MR-7).